Reading from the N-terminus, the 879-residue chain is Metabotropic glutamate receptor 3 (879 aa).

The signal sequence occupies residues 1–22 (MKMLTRLQVLTLALFSKGFLLS). Residues 23–576 (LGDHNFLRRE…EDYIRWEDAW (554 aa)) are Extracellular-facing. Cysteines 57 and 99 form a disulfide. L-glutamate is bound by residues Ser-151 and 172–174 (AST). The N-linked (GlcNAc...) asparagine glycan is linked to Asn-209. Residue Tyr-222 coordinates L-glutamate. Cystine bridges form between Cys-240–Cys-527, Cys-361–Cys-373, Cys-412–Cys-419, Cys-509–Cys-528, Cys-513–Cys-531, Cys-534–Cys-546, and Cys-549–Cys-562. Asn-292 carries an N-linked (GlcNAc...) asparagine glycan. Asp-301 serves as a coordination point for L-glutamate. Lys-389 serves as a coordination point for L-glutamate. Residues Asn-414 and Asn-439 are each glycosylated (N-linked (GlcNAc...) asparagine). A helical transmembrane segment spans residues 577–599 (AIGPVTIACLGFMCTCMVVTVFI). Residues 600–613 (KHNNTPLVKASGRE) lie on the Cytoplasmic side of the membrane. The chain crosses the membrane as a helical span at residues 614–634 (LCYILLFGVGLSYCMTFFFIA). Topologically, residues 635 to 645 (KPSPVICALRR) are extracellular. The chain crosses the membrane as a helical span at residues 646–664 (LGLGSSFAICYSALLTKTN). The Cytoplasmic segment spans residues 665–688 (CIARIFDGVKNGAQRPKFISPSSQ). Residues 689–709 (VFICLGLILVQIVMVSVWLIL) form a helical membrane-spanning segment. Residues 710–734 (EAPGTRRYTLAEKRETVILKCNVKD) lie on the Extracellular side of the membrane. Residues 735 to 756 (SSMLISLTYDVILVILCTVYAF) traverse the membrane as a helical segment. Residues 757 to 769 (KTRKCPENFNEAK) are Cytoplasmic-facing. The helical transmembrane segment at 770-792 (FIGFTMYTTCIIWLAFLPIFYVT) threads the bilayer. Topologically, residues 793-802 (SSDYRVQTTT) are extracellular. The chain crosses the membrane as a helical span at residues 803 to 828 (MCISVSLSGFVVLGCLFAPKVHIILF). The Cytoplasmic portion of the chain corresponds to 829-879 (QPQKNVVTHRLHLNRFSVSGTGTTYSQSSASTYVPTVCNGREVLDSTTSSL).

The protein belongs to the G-protein coupled receptor 3 family. In terms of assembly, interacts with TAMALIN. Detected in brain cortex, thalamus, subthalamic nucleus, substantia nigra, hypothalamus, hippocampus, corpus callosum, caudate nucleus and amygdala.

It localises to the cell membrane. In terms of biological role, G-protein coupled receptor for glutamate. Ligand binding causes a conformation change that triggers signaling via guanine nucleotide-binding proteins (G proteins) and modulates the activity of down-stream effectors. Signaling inhibits adenylate cyclase activity. This is Metabotropic glutamate receptor 3 (GRM3) from Homo sapiens (Human).